Reading from the N-terminus, the 227-residue chain is Germin-like protein subfamily 1 member 6 (227 aa).

The N-terminal stretch at 1 to 25 (MMEVLLRLLVTQVILLALATSFVSC) is a signal peptide. Cys-35 and Cys-51 are joined by a disulfide. One can recognise a Cupin type-1 domain in the interval 65 to 216 (SGLNIARNTT…AFQLDVKLVR (152 aa)). N-linked (GlcNAc...) asparagine glycosylation is found at Asn-72 and Asn-80. Positions 113, 115, 120, and 162 each coordinate Mn(2+).

This sequence belongs to the germin family. As to quaternary structure, oligomer (believed to be a pentamer but probably hexamer).

It localises to the secreted. Its subcellular location is the extracellular space. The protein resides in the apoplast. In terms of biological role, may play a role in plant defense. Probably has no oxalate oxidase activity even if the active site is conserved. This chain is Germin-like protein subfamily 1 member 6, found in Arabidopsis thaliana (Mouse-ear cress).